The sequence spans 584 residues: ETHYLENE INSENSITIVE 3-like 1 protein (584 aa).

Positions 41 to 74 form a coiled coil; sequence YTDDEMDVDELEKRMWRDKMRLKRLKEQQSKCKE. Residues 67–80 show a composition bias toward basic and acidic residues; sequence EQQSKCKEGVDGSK. Disordered stretches follow at residues 67 to 93 and 565 to 584; these read EQQSKCKEGVDGSKQRQSQEQARRKKM and EGMGKQQQQQQQQQDVSIWF.

Belongs to the EIN3 family. Acts as a homodimer to bind the primary ethylene response element.

The protein resides in the nucleus. Its function is as follows. Probable transcription factor acting as a positive regulator in the ethylene response pathway. Could bind the primary ethylene response element present in the ETHYLENE-RESPONSE-FACTOR1 promoter. This Arabidopsis thaliana (Mouse-ear cress) protein is ETHYLENE INSENSITIVE 3-like 1 protein (EIL1).